A 775-amino-acid chain; its full sequence is Mitosis inducer protein kinase cdr2 (775 aa).

The 253-residue stretch at 10–262 folds into the Protein kinase domain; the sequence is WELGLSLGSG…MEQIREHPFL (253 aa). ATP is bound by residues 16-24 and K39; that span reads LGSGGPNSS. The Proton acceptor role is filled by D133. Phosphoserine occurs at positions 309, 311, and 476. Over residues 549 to 563 the composition is skewed to low complexity; it reads NNIDNNNYNQPYANA. Residues 549 to 620 form a disordered region; sequence NNIDNNNYNQ…TKKKLSGSPF (72 aa). The span at 584–593 shows a compositional bias: polar residues; the sequence is LSQSPASYDS. 2 positions are modified to phosphoserine: S587 and S632.

This sequence belongs to the protein kinase superfamily. CAMK Ser/Thr protein kinase family. NIM1 subfamily. As to quaternary structure, interacts with blt1 and mid1. Post-translationally, autophosphorylated.

It catalyses the reaction L-seryl-[protein] + ATP = O-phospho-L-seryl-[protein] + ADP + H(+). The catalysed reaction is L-threonyl-[protein] + ATP = O-phospho-L-threonyl-[protein] + ADP + H(+). Functionally, acts as a mitotic inducer. In G2 it negatively regulates wee1, a mitotic inhibitor. Also has a role in cytokinesis where it required for proper septum formation. This Schizosaccharomyces pombe (strain 972 / ATCC 24843) (Fission yeast) protein is Mitosis inducer protein kinase cdr2 (cdr2).